A 272-amino-acid polypeptide reads, in one-letter code: Indole-3-glycerol phosphate synthase (272 aa).

The protein belongs to the TrpC family.

It carries out the reaction 1-(2-carboxyphenylamino)-1-deoxy-D-ribulose 5-phosphate + H(+) = (1S,2R)-1-C-(indol-3-yl)glycerol 3-phosphate + CO2 + H2O. It participates in amino-acid biosynthesis; L-tryptophan biosynthesis; L-tryptophan from chorismate: step 4/5. This is Indole-3-glycerol phosphate synthase from Mycolicibacterium gilvum (strain PYR-GCK) (Mycobacterium gilvum (strain PYR-GCK)).